A 684-amino-acid polypeptide reads, in one-letter code: DNA ligase (684 aa).

NAD(+) is bound by residues D34–D38, S83–L84, and E117. The active-site N6-AMP-lysine intermediate is the K119. Residues R140, E188, K301, and K325 each contribute to the NAD(+) site. Residues C419, C422, C437, and C443 each coordinate Zn(2+). The 83-residue stretch at D602–D684 folds into the BRCT domain.

This sequence belongs to the NAD-dependent DNA ligase family. LigA subfamily. Requires Mg(2+) as cofactor. Mn(2+) serves as cofactor.

It carries out the reaction NAD(+) + (deoxyribonucleotide)n-3'-hydroxyl + 5'-phospho-(deoxyribonucleotide)m = (deoxyribonucleotide)n+m + AMP + beta-nicotinamide D-nucleotide.. In terms of biological role, DNA ligase that catalyzes the formation of phosphodiester linkages between 5'-phosphoryl and 3'-hydroxyl groups in double-stranded DNA using NAD as a coenzyme and as the energy source for the reaction. It is essential for DNA replication and repair of damaged DNA. This Chloroherpeton thalassium (strain ATCC 35110 / GB-78) protein is DNA ligase.